Consider the following 223-residue polypeptide: Killer cell lectin-like receptor subfamily B member 1B allele A (223 aa).

The Cytoplasmic portion of the chain corresponds to 1-43 (MDSTTLVYADLNLARIQEPKHDSPPSLSPDTCRCPRWHRLALK). Residues 6–11 (LVYADL) carry the ITIM motif motif. Positions 32–35 (CRCP) match the LCK-binding motif motif. The helical; Signal-anchor for type II membrane protein transmembrane segment at 44–63 (FGCAGLILLVLVVIGLCVLV) threads the bilayer. Residues 64 to 223 (LSVQKSSVQK…LNHETPSNDS (160 aa)) are Extracellular-facing. One can recognise a C-type lectin domain in the interval 93 to 212 (ECPQDWLSHR…STDNRWICQK (120 aa)). Cystine bridges form between Cys122–Cys210 and Cys189–Cys202.

Homodimer; disulfide-linked. Interacts with tyrosine kinase LCK. Binds PTPN6/SHP-1 in a phosphorylation-dependent manner. In terms of tissue distribution, expressed in NK cells and a subset of T-cells.

The protein localises to the membrane. Receptor for CLEC2D/OCIL. Ligand-binding contributes to inhibition of cytotoxic natural killer (NK) cells. May mediate MHC class I-independent 'missing-self' recognition of allografts, tumor cells and virus-infected cells. This chain is Killer cell lectin-like receptor subfamily B member 1B allele A (Klrb1b), found in Mus musculus (Mouse).